A 624-amino-acid chain; its full sequence is DNA-directed RNA polymerase subunit gamma (624 aa).

The Zn(2+) site is built by C70, C72, C85, and C88. The Mg(2+) site is built by D466, D468, and D470.

It belongs to the RNA polymerase beta' chain family. RpoC1 subfamily. In cyanobacteria the RNAP catalytic core is composed of 2 alpha, 1 beta, 1 beta', 1 gamma and 1 omega subunit. When a sigma factor is associated with the core the holoenzyme is formed, which can initiate transcription. It depends on Mg(2+) as a cofactor. Zn(2+) is required as a cofactor.

It carries out the reaction RNA(n) + a ribonucleoside 5'-triphosphate = RNA(n+1) + diphosphate. In terms of biological role, DNA-dependent RNA polymerase catalyzes the transcription of DNA into RNA using the four ribonucleoside triphosphates as substrates. The polypeptide is DNA-directed RNA polymerase subunit gamma (Synechococcus elongatus (strain ATCC 33912 / PCC 7942 / FACHB-805) (Anacystis nidulans R2)).